Reading from the N-terminus, the 413-residue chain is DnaJ protein homolog xdj1 (413 aa).

A J domain is found at 6-73 (KLYDILEVHF…ESREMYDMYG (68 aa)). A CR-type zinc finger spans residues 134-219 (GKEVKLRATR…CKGSGTVPEQ (86 aa)). 4 CXXCXGXG motif repeats span residues 147–154 (CPRCQGRG), 164–171 (CLSCDGKG), 191–198 (CDTCNGKG), and 207–214 (CKHCKGSG). A Cysteine methyl ester modification is found at Cys410. Cys410 is lipidated: S-farnesyl cysteine. The propeptide at 411 to 413 (QAQ) is removed in mature form.

Its subcellular location is the endoplasmic reticulum membrane. This is DnaJ protein homolog xdj1 (xdj1) from Schizosaccharomyces pombe (strain 972 / ATCC 24843) (Fission yeast).